Here is a 134-residue protein sequence, read N- to C-terminus: MASKFRLQIVTPDRTFLDEEVEMAVVRTVSGDEGILSDHMLMVTPLKIGKMKIQIGDELKEATIAGGFIQVDQDKTIIITDAAEWPEEIDVSRAEEAKQRAEERLQKEREEVDTFRAEIALKKATNRLGLTKNK.

This sequence belongs to the ATPase epsilon chain family. In terms of assembly, F-type ATPases have 2 components, CF(1) - the catalytic core - and CF(0) - the membrane proton channel. CF(1) has five subunits: alpha(3), beta(3), gamma(1), delta(1), epsilon(1). CF(0) has three main subunits: a, b and c.

Its subcellular location is the cell membrane. Functionally, produces ATP from ADP in the presence of a proton gradient across the membrane. This Alkaliphilus metalliredigens (strain QYMF) protein is ATP synthase epsilon chain.